A 172-amino-acid polypeptide reads, in one-letter code: MSSLENNNSSWIDWFLGIKGNQFLCRVPTDYVQDTFNQMGLEYFSEILDVILKPVIDSSSGLLYGDEKKWYGMIHARYIRSERGLIAMHRKYLRGDFGSCPNISCYRQNTLPVGLSAVWGKSTVKIHCPRCKSNFHPKSDTQLDGAMFGPSFPDIFFSMLPNLTSPLDDPRT.

It belongs to the casein kinase 2 subunit beta family. As to quaternary structure, interacts in vitro with the casein kinase 2 alpha subunit (CkII-alpha). The relevance of such interaction is however unclear in vivo. As to expression, probably not expressed in wild-type flies. In males lacking the Y chromosome, it is testis-specific and constitutes the main component of star-shaped crystals.

Its function is as follows. Unknown. In males lacking the Y chromosome, its strong overexpression leads to the appearance of proteinaceous star-shaped crystals in the primary spermatocytes causing meiotic drive, possibly by interfering with normal casein kinase 2 activity. The protein is Stellate protein CG33238 (Ste:CG33238) of Drosophila melanogaster (Fruit fly).